Here is a 164-residue protein sequence, read N- to C-terminus: UPF0304 protein YE1336 (164 aa).

Belongs to the UPF0304 family.

In Yersinia enterocolitica serotype O:8 / biotype 1B (strain NCTC 13174 / 8081), this protein is UPF0304 protein YE1336.